The primary structure comprises 1019 residues: Pleckstrin homology domain-containing family M member 2 (1019 aa).

An N-acetylmethionine modification is found at methionine 1. Residues 1–310 (MEPGEVKDRI…LDPPDACTEL (310 aa)) are interaction with KIF5B. The RUN domain maps to 36–158 (RNHDKVLQRL…IRFELDLDAP (123 aa)). 3 disordered regions span residues 230–458 (SVPS…SEGL), 471–525 (SPST…REAQ), and 557–581 (QPSPCLSSAEDSGVDEGQGSPSEMV). 2 stretches are compositionally biased toward polar residues: residues 243-272 (DTVSGPRSTASDLTSSKASTRSPTQRQNPF) and 279-291 (TVSSSDTTPVHTT). Over residues 315-327 (VTKKKKIGKKKKS) the composition is skewed to basic residues. Polar residues predominate over residues 417-427 (LNGQLDPSTWC). A Phosphoserine modification is found at serine 441. The span at 516–525 (PLEDTTREAQ) shows a compositional bias: basic and acidic residues. An interaction with sifA region spans residues 762-885 (PCHCSPPEGT…VIPQGVAPSP (124 aa)). The PH domain occupies 771 to 873 (TITKEGMLHY…WMQHLCQAVS (103 aa)).

Interacts with KLC2 (via TPR repeats). Interacts with KIF5B. Interacts with BORCS5. Interacts (via RUN domain) with ARL8B (GTP-bound form); PLEKHM1 and PLEKHM2 compete for interaction with ARL8B. Interacts with ARL8A. As to quaternary structure, (Microbial infection) Interacts with the S.typhimurium sifA protein; required for S.typhimurium infection.

It is found in the cytoplasm. The protein localises to the lysosome membrane. In terms of biological role, plays a role in lysosomes movement and localization at the cell periphery acting as an effector of ARL8B. Required for ARL8B to exert its effects on lysosome location, recruits kinesin-1 to lysosomes and hence direct their movement toward microtubule plus ends. Binding to ARL8B provides a link from lysosomal membranes to plus-end-directed motility. Critical factor involved in NK cell-mediated cytotoxicity. Drives the polarization of cytolytic granules and microtubule-organizing centers (MTOCs) toward the immune synapse between effector NK lymphocytes and target cells. Required for maintenance of the Golgi apparatus organization. May play a role in membrane tubulation. The chain is Pleckstrin homology domain-containing family M member 2 from Homo sapiens (Human).